The sequence spans 301 residues: Probable alpha-L-glutamate ligase 1 (301 aa).

The region spanning 104–287 (MQLMSRRGIG…VAGAIIDFVE (184 aa)) is the ATP-grasp domain. ATP-binding positions include K141, 178 to 179 (EY), D187, and 211 to 213 (RSN). 3 residues coordinate Mg(2+): D248, E260, and N262. Positions 248, 260, and 262 each coordinate Mn(2+).

This sequence belongs to the RimK family. Mg(2+) is required as a cofactor. Requires Mn(2+) as cofactor.

In Shewanella baltica (strain OS185), this protein is Probable alpha-L-glutamate ligase 1.